The following is a 153-amino-acid chain: Probable inactive ribonuclease-like protein 13 (153 aa).

An N-terminal signal peptide occupies residues 1–22; it reads MASDAASLLVLQLVLQPTLVTG.

This sequence belongs to the pancreatic ribonuclease family.

The protein resides in the secreted. Functionally, does not exhibit any ribonuclease activity. The polypeptide is Probable inactive ribonuclease-like protein 13 (Rnase13) (Rattus norvegicus (Rat)).